The following is a 579-amino-acid chain: 2-isopropylmalate synthase (579 aa).

In terms of domain architecture, Pyruvate carboxyltransferase spans 40 to 314 (PRWCAVDLRD…DPMIDFSDID (275 aa)). 4 residues coordinate Mg(2+): Asp-49, His-253, His-255, and Asn-289. A regulatory domain region spans residues 456–579 (SGKADGQWGR…VNRAIRDAQS (124 aa)).

Belongs to the alpha-IPM synthase/homocitrate synthase family. LeuA type 2 subfamily. In terms of assembly, homodimer. Mg(2+) serves as cofactor.

It is found in the cytoplasm. The catalysed reaction is 3-methyl-2-oxobutanoate + acetyl-CoA + H2O = (2S)-2-isopropylmalate + CoA + H(+). It participates in amino-acid biosynthesis; L-leucine biosynthesis; L-leucine from 3-methyl-2-oxobutanoate: step 1/4. Catalyzes the condensation of the acetyl group of acetyl-CoA with 3-methyl-2-oxobutanoate (2-ketoisovalerate) to form 3-carboxy-3-hydroxy-4-methylpentanoate (2-isopropylmalate). The protein is 2-isopropylmalate synthase of Pseudarthrobacter chlorophenolicus (strain ATCC 700700 / DSM 12829 / CIP 107037 / JCM 12360 / KCTC 9906 / NCIMB 13794 / A6) (Arthrobacter chlorophenolicus).